The chain runs to 281 residues: Fructose-bisphosphate aldolase class 1 (281 aa).

Residue K191 is the Schiff-base intermediate with dihydroxyacetone-P of the active site.

The protein belongs to the DeoC/FbaB aldolase family. As to quaternary structure, homooctamer.

It localises to the cytoplasm. The enzyme catalyses beta-D-fructose 1,6-bisphosphate = D-glyceraldehyde 3-phosphate + dihydroxyacetone phosphate. Its activity is regulated as follows. Activated by citrate. In Pyrococcus abyssi (strain GE5 / Orsay), this protein is Fructose-bisphosphate aldolase class 1 (fba).